Reading from the N-terminus, the 263-residue chain is 3-deoxy-manno-octulosonate cytidylyltransferase (263 aa).

It belongs to the KdsB family.

The protein localises to the cytoplasm. It catalyses the reaction 3-deoxy-alpha-D-manno-oct-2-ulosonate + CTP = CMP-3-deoxy-beta-D-manno-octulosonate + diphosphate. The protein operates within nucleotide-sugar biosynthesis; CMP-3-deoxy-D-manno-octulosonate biosynthesis; CMP-3-deoxy-D-manno-octulosonate from 3-deoxy-D-manno-octulosonate and CTP: step 1/1. It participates in bacterial outer membrane biogenesis; lipopolysaccharide biosynthesis. Its function is as follows. Activates KDO (a required 8-carbon sugar) for incorporation into bacterial lipopolysaccharide in Gram-negative bacteria. In Burkholderia thailandensis (strain ATCC 700388 / DSM 13276 / CCUG 48851 / CIP 106301 / E264), this protein is 3-deoxy-manno-octulosonate cytidylyltransferase.